The following is a 134-amino-acid chain: uncharacterized protein (134 aa).

3 helical membrane passes run 9–29 (PYFLAFLRIVVAYMFILHGTA), 49–69 (MLLVAGVIEIVGSILLILGLF), and 107–127 (ALLYSLLFLYFVFSGAGACAL).

Belongs to the DoxX family.

It is found in the cell membrane. This is an uncharacterized protein from Haemophilus influenzae (strain ATCC 51907 / DSM 11121 / KW20 / Rd).